A 143-amino-acid polypeptide reads, in one-letter code: Large ribosomal subunit protein uL13 (143 aa).

This sequence belongs to the universal ribosomal protein uL13 family. As to quaternary structure, part of the 50S ribosomal subunit.

Functionally, this protein is one of the early assembly proteins of the 50S ribosomal subunit, although it is not seen to bind rRNA by itself. It is important during the early stages of 50S assembly. This Methanosarcina acetivorans (strain ATCC 35395 / DSM 2834 / JCM 12185 / C2A) protein is Large ribosomal subunit protein uL13.